The primary structure comprises 881 residues: Alanine--tRNA ligase (881 aa).

4 residues coordinate Zn(2+): histidine 568, histidine 572, cysteine 670, and histidine 674.

The protein belongs to the class-II aminoacyl-tRNA synthetase family. It depends on Zn(2+) as a cofactor.

Its subcellular location is the cytoplasm. The catalysed reaction is tRNA(Ala) + L-alanine + ATP = L-alanyl-tRNA(Ala) + AMP + diphosphate. Catalyzes the attachment of alanine to tRNA(Ala) in a two-step reaction: alanine is first activated by ATP to form Ala-AMP and then transferred to the acceptor end of tRNA(Ala). Also edits incorrectly charged Ser-tRNA(Ala) and Gly-tRNA(Ala) via its editing domain. The polypeptide is Alanine--tRNA ligase (Moorella thermoacetica (strain ATCC 39073 / JCM 9320)).